We begin with the raw amino-acid sequence, 618 residues long: Very-long-chain aldehyde decarbonylase GL1-3 (618 aa).

The next 7 helical transmembrane spans lie at 9–29 (LSSWPWAFLGSYKYLLYGPVV), 46–66 (TSWCLHLILLLALRSLTMLFF), 91–111 (MVIMQTLIAAVLVTSRVFPAT), 121–141 (GWAIAVVLHVAVSEPAFYWAH), 174–194 (LESLILTLVAWAPLAGAFMAG), 289–309 (DFVFLVHVVDVVSSMHVPFAF), and 315–335 (LPFATHLVLLPLWPIAFGFML). In terms of domain architecture, Fatty acid hydroxylase spans 127 to 267 (VLHVAVSEPA…MPLFDALGGT (141 aa)).

The protein belongs to the sterol desaturase family. In terms of assembly, homodimer. Expressed in germinating seeds and stamens.

The protein resides in the endoplasmic reticulum membrane. The catalysed reaction is a long-chain fatty aldehyde + 2 NADPH + O2 + H(+) = a long-chain alkane + formate + 2 NADP(+) + H2O. In terms of biological role, aldehyde decarbonylase involved in the conversion of aldehydes to alkanes. Core component of a very-long-chain alkane synthesis complex. In Oryza sativa subsp. japonica (Rice), this protein is Very-long-chain aldehyde decarbonylase GL1-3.